A 54-amino-acid polypeptide reads, in one-letter code: Califin-B (54 aa).

A disulfide bridge connects residues C25 and C53. Residue L36 is modified to Leucine amide.

The protein belongs to the molluscan ELH family. In terms of assembly, this protein consists of a large 36-residue subunit, bound by a single disulfide-bond to a small 18-residue subunit.

Its subcellular location is the secreted. Functionally, injected in sexually mature animals califin B excites LB and LC cells of the abdominal ganglion and cause egg-laying. The polypeptide is Califin-B (Aplysia californica (California sea hare)).